Consider the following 109-residue polypeptide: Large ribosomal subunit protein eL30A (109 aa).

The protein belongs to the eukaryotic ribosomal protein eL30 family. Component of the large ribosomal subunit (LSU). Mature yeast ribosomes consist of a small (40S) and a large (60S) subunit. The 40S small subunit contains 1 molecule of ribosomal RNA (18S rRNA) and at least 33 different proteins. The large 60S subunit contains 3 rRNA molecules (25S, 5.8S and 5S rRNA) and at least 46 different proteins.

Its subcellular location is the cytoplasm. Its function is as follows. Component of the ribosome, a large ribonucleoprotein complex responsible for the synthesis of proteins in the cell. The small ribosomal subunit (SSU) binds messenger RNAs (mRNAs) and translates the encoded message by selecting cognate aminoacyl-transfer RNA (tRNA) molecules. The large subunit (LSU) contains the ribosomal catalytic site termed the peptidyl transferase center (PTC), which catalyzes the formation of peptide bonds, thereby polymerizing the amino acids delivered by tRNAs into a polypeptide chain. The nascent polypeptides leave the ribosome through a tunnel in the LSU and interact with protein factors that function in enzymatic processing, targeting, and the membrane insertion of nascent chains at the exit of the ribosomal tunnel. This chain is Large ribosomal subunit protein eL30A (rpl3001), found in Schizosaccharomyces pombe (strain 972 / ATCC 24843) (Fission yeast).